Consider the following 308-residue polypeptide: Probable 5-dehydro-4-deoxyglucarate dehydratase (308 aa).

It belongs to the DapA family.

It carries out the reaction 5-dehydro-4-deoxy-D-glucarate + H(+) = 2,5-dioxopentanoate + CO2 + H2O. The protein operates within carbohydrate acid metabolism; D-glucarate degradation; 2,5-dioxopentanoate from D-glucarate: step 2/2. This is Probable 5-dehydro-4-deoxyglucarate dehydratase from Bacillus licheniformis (strain ATCC 14580 / DSM 13 / JCM 2505 / CCUG 7422 / NBRC 12200 / NCIMB 9375 / NCTC 10341 / NRRL NRS-1264 / Gibson 46).